A 221-amino-acid polypeptide reads, in one-letter code: Peptide methionine sulfoxide reductase MsrA (221 aa).

Residue Cys54 is part of the active site.

It belongs to the MsrA Met sulfoxide reductase family.

It catalyses the reaction L-methionyl-[protein] + [thioredoxin]-disulfide + H2O = L-methionyl-(S)-S-oxide-[protein] + [thioredoxin]-dithiol. It carries out the reaction [thioredoxin]-disulfide + L-methionine + H2O = L-methionine (S)-S-oxide + [thioredoxin]-dithiol. Its function is as follows. Has an important function as a repair enzyme for proteins that have been inactivated by oxidation. Catalyzes the reversible oxidation-reduction of methionine sulfoxide in proteins to methionine. This chain is Peptide methionine sulfoxide reductase MsrA, found in Methylobacterium nodulans (strain LMG 21967 / CNCM I-2342 / ORS 2060).